A 107-amino-acid chain; its full sequence is Large ribosomal subunit protein bL21c (107 aa).

The protein belongs to the bacterial ribosomal protein bL21 family. As to quaternary structure, part of the 50S ribosomal subunit.

The protein localises to the plastid. The protein resides in the chloroplast. In terms of biological role, this protein binds to 23S rRNA. The protein is Large ribosomal subunit protein bL21c of Cyanidioschyzon merolae (strain NIES-3377 / 10D) (Unicellular red alga).